The chain runs to 183 residues: Der GTPase-activating protein YihI (183 aa).

Positions 1 to 18 (MNQPSKAPRAPRSSAATP) are enriched in low complexity. The tract at residues 1 to 114 (MNQPSKAPRA…EEELAKLEND (114 aa)) is disordered. The span at 25-34 (RAELDQEARE) shows a compositional bias: basic and acidic residues. Over residues 56–65 (NQKNKAAAQA) the composition is skewed to low complexity. Over residues 92–114 (PKAEAKPKPRLTPEEELAKLEND) the composition is skewed to basic and acidic residues.

The protein belongs to the YihI family. As to quaternary structure, interacts with Der.

A GTPase-activating protein (GAP) that modifies Der/EngA GTPase function. May play a role in ribosome biogenesis. This chain is Der GTPase-activating protein YihI, found in Serratia proteamaculans (strain 568).